Consider the following 496-residue polypeptide: MPSILTDFNVRPYEDVPAQIIELSVPDAAAPKHCPIQLLYWPVEGKSNFIRGYENLKDGLSRLLADVPVLVGRLERGSKGDPRYLAVTISSDASVELEYEDISADDTIASYDDLVRNGFPTTGFKDIVSPKMSLGPMVEGSPMMCAKLNLIKGGAILAYGFSHVLADGWANSELGRLWALHAAHVSQGIGFERQKAATPDDEIRRQLSTLPDFDADAPLDAFLQITPSEEATNFLHKDVLAAEKAKKKAREKMMATLLAAGEVPELPRFTFWRFTPEKLKELKQAATSSDASKWISTMDALAGLFWSRIARIQGQSSNGHQQSRCIFALDIRRRLQQPVPLAYVGNVFSPVDAICPLDELESDSLGLKAAAQSMRQANKGWTQPRWEAWLNKIMSLPLDQTLDTSQEFRLQKHNMYFNDYSAFQLNTASWGAPFGQPARTRCLRSGLAGGAAGVWVCPKFPDGSLEVWLTSTAAIQKSLFEDATFNRYAEFVCQYT.

H163 functions as the Proton acceptor in the catalytic mechanism.

Belongs to the plant acyltransferase family. Monomer.

It participates in secondary metabolite biosynthesis. Its function is as follows. Acyltransferase; part of the gene cluster that mediates the biosynthesis of squalestatin S1 (SQS1, also known as zaragozic acid A), a heavily oxidized fungal polyketide that offers potent cholesterol lowering activity by targeting squalene synthase (SS). SQS1 is composed of a 2,8-dioxobicyclic[3.2.1]octane-3,4,5-tricarboxyclic acid core that is connected to two lipophilic polyketide arms. These initial steps feature the priming of an unusual benzoic acid starter unit onto the highly reducing polyketide synthase pks2, followed by oxaloacetate extension and product release to generate a tricarboxylic acid containing product. The phenylalanine ammonia lyase (PAL) M7 and the acyl-CoA ligase M9 are involved in transforming phenylalanine into benzoyl-CoA. The citrate synthase-like protein R3 is involved in connecting the C-alpha-carbons of the hexaketide chain and oxaloacetate to afford the tricarboxylic acid unit. The potential hydrolytic enzymes, M8 and M10, are in close proximity to pks2 and may participate in product release. On the other side, the tetraketide arm is synthesized by a the squalestatin tetraketide synthase pks1 and enzymatically esterified to the core in the last biosynthetic step, by the acetyltransferase M4. The biosynthesis of the tetraketide must involve 3 rounds of chain extension. After the first and second rounds methyl-transfer occurs, and in all rounds of extension the ketoreductase and dehydratase are active. The enoyl reductase and C-MeT of pks1 are not active in the final round of extension. The acetyltransferase M4 appears to have a broad substrate selectivity for its acyl CoA substrate, allowing the in vitro synthesis of novel squalestatins. The biosynthesis of SQS1 requires several oxidative steps likely performed by oxidoreductases M1, R1 and R2. Finally, in support of the identification of the cluster as being responsible for SQS1 production, the cluster contains a gene encoding a putative squalene synthase (SS) R6, suggesting a likely mechanism for self-resistance. In Phoma sp. (strain ATCC 20986 / MF5453), this protein is Acyltransferase M4.